A 60-amino-acid chain; its full sequence is MADRVKVTLIKSTIGAVPKNKKTIEALGLTKLGKTVELPNNAATQGAVRKVAPYVKVEEV.

The protein belongs to the universal ribosomal protein uL30 family. As to quaternary structure, part of the 50S ribosomal subunit.

This chain is Large ribosomal subunit protein uL30, found in Agathobacter rectalis (strain ATCC 33656 / DSM 3377 / JCM 17463 / KCTC 5835 / VPI 0990) (Eubacterium rectale).